Here is a 453-residue protein sequence, read N- to C-terminus: Tryptophan biosynthesis protein TrpCF (453 aa).

The interval 1–257 (MMQTVLAKIV…AAVRRVLLGE (257 aa)) is indole-3-glycerol phosphate synthase. Residues 258–453 (NKVCGLTRGQ…ASVFQTLRAY (196 aa)) form an N-(5'-phosphoribosyl)anthranilate isomerase region.

The protein in the N-terminal section; belongs to the TrpC family. It in the C-terminal section; belongs to the TrpF family. In terms of assembly, monomer.

The enzyme catalyses N-(5-phospho-beta-D-ribosyl)anthranilate = 1-(2-carboxyphenylamino)-1-deoxy-D-ribulose 5-phosphate. The catalysed reaction is 1-(2-carboxyphenylamino)-1-deoxy-D-ribulose 5-phosphate + H(+) = (1S,2R)-1-C-(indol-3-yl)glycerol 3-phosphate + CO2 + H2O. It participates in amino-acid biosynthesis; L-tryptophan biosynthesis; L-tryptophan from chorismate: step 3/5. The protein operates within amino-acid biosynthesis; L-tryptophan biosynthesis; L-tryptophan from chorismate: step 4/5. In terms of biological role, bifunctional enzyme that catalyzes two sequential steps of tryptophan biosynthetic pathway. The first reaction is catalyzed by the isomerase, coded by the TrpF domain; the second reaction is catalyzed by the synthase, coded by the TrpC domain. In Escherichia coli (strain K12), this protein is Tryptophan biosynthesis protein TrpCF (trpC).